The primary structure comprises 55 residues: Small ribosomal subunit protein bS21 (55 aa).

It belongs to the bacterial ribosomal protein bS21 family.

The polypeptide is Small ribosomal subunit protein bS21 (Ureaplasma parvum serovar 3 (strain ATCC 27815 / 27 / NCTC 11736)).